Reading from the N-terminus, the 226-residue chain is ATP-dependent dethiobiotin synthetase BioD (226 aa).

12–17 (DAGKTV) provides a ligand contact to ATP. Position 16 (Thr16) interacts with Mg(2+). The active site involves Lys39. Residue Ser43 coordinates substrate. Residues Asp47, 108–111 (EGVG), 168–169 (NC), 200–202 (PYL), and Asn207 each bind ATP. Residues Asp47 and Glu108 each contribute to the Mg(2+) site.

It belongs to the dethiobiotin synthetase family. Homodimer. Mg(2+) serves as cofactor.

It localises to the cytoplasm. It carries out the reaction (7R,8S)-7,8-diammoniononanoate + CO2 + ATP = (4R,5S)-dethiobiotin + ADP + phosphate + 3 H(+). It catalyses the reaction (7R,8S)-8-amino-7-(carboxyamino)nonanoate + ATP = (4R,5S)-dethiobiotin + ADP + phosphate + H(+). Its pathway is cofactor biosynthesis; biotin biosynthesis; biotin from 7,8-diaminononanoate: step 1/2. Its function is as follows. Catalyzes a mechanistically unusual reaction, the ATP-dependent insertion of CO2 between the N7 and N8 nitrogen atoms of 7,8-diaminopelargonic acid (DAPA, also called 7,8-diammoniononanoate) to form a ureido ring. This cyanobacterium does not encode bioA (which catalyzes the formation of the precursor for this reaction in the cannonical pathway), instead it encodes bioU, which replaces bioA and also performs the first half of the cannonical BioD reaction. Thus in this organism BioD has a different substrate. The polypeptide is ATP-dependent dethiobiotin synthetase BioD (Cyanothece sp. (strain PCC 7425 / ATCC 29141)).